An 83-amino-acid chain; its full sequence is Cytochrome b559 subunit alpha (83 aa).

Residues 22-36 (VIHAVTLPAIFLAGF) traverse the membrane as a helical segment. Residue histidine 24 coordinates heme.

Belongs to the PsbE/PsbF family. As to quaternary structure, heterodimer of an alpha subunit and a beta subunit. PSII is composed of 1 copy each of membrane proteins PsbA, PsbB, PsbC, PsbD, PsbE, PsbF, PsbH, PsbI, PsbJ, PsbK, PsbL, PsbM, PsbT, PsbX, PsbY, PsbZ, Psb30/Ycf12, peripheral proteins PsbO, CyanoQ (PsbQ), PsbU, PsbV and a large number of cofactors. It forms dimeric complexes. The cofactor is heme b.

The protein localises to the cellular thylakoid membrane. Functionally, this b-type cytochrome is tightly associated with the reaction center of photosystem II (PSII). PSII is a light-driven water:plastoquinone oxidoreductase that uses light energy to abstract electrons from H(2)O, generating O(2) and a proton gradient subsequently used for ATP formation. It consists of a core antenna complex that captures photons, and an electron transfer chain that converts photonic excitation into a charge separation. The chain is Cytochrome b559 subunit alpha from Synechococcus sp. (strain RCC307).